Here is a 319-residue protein sequence, read N- to C-terminus: tRNA uridine(34) hydroxylase (319 aa).

A Rhodanese domain is found at 133 to 231 (EDPDSVVIDT…YLEDVSSENS (99 aa)). The Cysteine persulfide intermediate role is filled by Cys191.

Belongs to the TrhO family.

The catalysed reaction is uridine(34) in tRNA + AH2 + O2 = 5-hydroxyuridine(34) in tRNA + A + H2O. Functionally, catalyzes oxygen-dependent 5-hydroxyuridine (ho5U) modification at position 34 in tRNAs. In Prochlorococcus marinus (strain NATL1A), this protein is tRNA uridine(34) hydroxylase.